We begin with the raw amino-acid sequence, 206 residues long: Flavin reductase (NADPH) (206 aa).

Positions 10, 12, 13, 14, 15, 35, 38, and 39 each coordinate NADP(+). At Ser42 the chain carries Phosphoserine. Residues Asp54, Val55, Leu75, Gly76, and Arg78 each coordinate NADP(+). Position 82 is a phosphoserine (Ser82). NADP(+)-binding residues include Met87, Cys109, His132, His153, and Ile154. Cys109 functions as the S-nitroso-cysteine intermediate; for S-nitroso-CoA-dependent nitrosyltransferase activity in the catalytic mechanism. The active-site S-nitroso-cysteine intermediate; for S-nitroso-CoA-dependent nitrosyltransferase activity is the Cys188.

Belongs to the BLVRB family. In terms of assembly, monomer. In terms of tissue distribution, predominantly expressed in liver and erythrocytes. At lower levels in heart, lung, adrenal gland and cerebrum. Expressed in adult red blood cells.

It localises to the cytoplasm. It catalyses the reaction reduced riboflavin + NADP(+) = riboflavin + NADPH + 2 H(+). The enzyme catalyses bilirubin IXbeta + NADP(+) = biliverdin IXbeta + NADPH + H(+). It carries out the reaction FMNH2 + NAD(+) = FMN + NADH + 2 H(+). The catalysed reaction is FMNH2 + NADP(+) = FMN + NADPH + 2 H(+). It catalyses the reaction S-nitroso-CoA + L-cysteinyl-[protein] = S-nitroso-L-cysteinyl-[protein] + CoA. The enzyme catalyses L-cysteinyl-[SCAN] + S-nitroso-CoA = S-nitroso-L-cysteinyl-[SCAN] + CoA. It carries out the reaction S-nitroso-L-cysteinyl-[SCAN] + L-cysteinyl-[protein] = L-cysteinyl-[SCAN] + S-nitroso-L-cysteinyl-[protein]. With respect to regulation, mesobiliverdin acts as a competitive inhibitor for flavin reduction, indicating that flavin and tetrapyrrole substrates compete for the same site. Inhibited by a wide range of xanthene-based drugs, such as phloxine B, erythrosin B, tamibarotene, sulfasalazine, olsalazine, febuxostat, ataluren (PTC124) and deferasirox. Enzyme that can both act as a NAD(P)H-dependent reductase and a S-nitroso-CoA-dependent nitrosyltransferase. Promotes fetal heme degradation during development. Also expressed in adult tissues, where it acts as a regulator of hematopoiesis, intermediary metabolism (glutaminolysis, glycolysis, TCA cycle and pentose phosphate pathway) and insulin signaling. Has a broad specificity oxidoreductase activity by catalyzing the NAD(P)H-dependent reduction of a variety of flavins, such as riboflavin, FAD or FMN, biliverdins, methemoglobin and PQQ (pyrroloquinoline quinone). Contributes to fetal heme catabolism by catalyzing reduction of biliverdin IXbeta into bilirubin IXbeta in the liver. Biliverdin IXbeta, which constitutes the major heme catabolite in the fetus is not present in adult. Does not reduce bilirubin IXalpha. Can also reduce the complexed Fe(3+) iron to Fe(2+) in the presence of FMN and NADPH. Acts as a protein nitrosyltransferase by catalyzing nitrosylation of cysteine residues of target proteins, such as HMOX2, INSR and IRS1. S-nitroso-CoA-dependent nitrosyltransferase activity is mediated via a 'ping-pong' mechanism: BLVRB first associates with both S-nitroso-CoA and protein substrate, nitric oxide group is then transferred from S-nitroso-CoA to Cys-109 and Cys-188 residues of BLVRB and from S-nitroso-BLVRB to the protein substrate. Inhibits insulin signaling by mediating nitrosylation of INSR and IRS1, leading to their inhibition. In Homo sapiens (Human), this protein is Flavin reductase (NADPH).